The chain runs to 259 residues: UPF0246 protein NMA1114 (259 aa).

Belongs to the UPF0246 family.

This chain is UPF0246 protein NMA1114, found in Neisseria meningitidis serogroup A / serotype 4A (strain DSM 15465 / Z2491).